The sequence spans 485 residues: Maturase K (485 aa).

It belongs to the intron maturase 2 family. MatK subfamily.

The protein localises to the plastid. It is found in the chloroplast. Usually encoded in the trnK tRNA gene intron. Probably assists in splicing its own and other chloroplast group II introns. In Malus domestica (Apple), this protein is Maturase K.